The following is a 443-amino-acid chain: Thymidine phosphorylase (443 aa).

The protein belongs to the thymidine/pyrimidine-nucleoside phosphorylase family. In terms of assembly, homodimer.

The enzyme catalyses thymidine + phosphate = 2-deoxy-alpha-D-ribose 1-phosphate + thymine. It participates in pyrimidine metabolism; dTMP biosynthesis via salvage pathway; dTMP from thymine: step 1/2. The enzymes which catalyze the reversible phosphorolysis of pyrimidine nucleosides are involved in the degradation of these compounds and in their utilization as carbon and energy sources, or in the rescue of pyrimidine bases for nucleotide synthesis. The polypeptide is Thymidine phosphorylase (Shewanella amazonensis (strain ATCC BAA-1098 / SB2B)).